The primary structure comprises 578 residues: Acyl-coenzyme A synthetase ACSM5, mitochondrial (578 aa).

Residues Met1–Ile22 constitute a mitochondrion transit peptide. Lys96 is modified (N6-acetyllysine; alternate). Lys96 bears the N6-succinyllysine; alternate mark. Lys151 carries the N6-acetyllysine modification. Residue Thr229–Lys237 coordinates ATP. An N6-acetyllysine modification is found at Lys335. ATP-binding positions include Glu367 to Ser372, Asp454, Arg469, and Lys565.

It belongs to the ATP-dependent AMP-binding enzyme family. Requires Mg(2+) as cofactor. It depends on Mn(2+) as a cofactor.

It localises to the mitochondrion matrix. It carries out the reaction a medium-chain fatty acid + ATP + CoA = a medium-chain fatty acyl-CoA + AMP + diphosphate. Its function is as follows. Catalyzes the activation of fatty acids by CoA to produce an acyl-CoA, the first step in fatty acid metabolism. In Rattus norvegicus (Rat), this protein is Acyl-coenzyme A synthetase ACSM5, mitochondrial (Acsm5).